The following is a 126-amino-acid chain: Protein ApaG (126 aa).

An ApaG domain is found at 2-126 (ADKLYQMEVQ…MTLVAPRVLH (125 aa)).

This is Protein ApaG from Chromobacterium violaceum (strain ATCC 12472 / DSM 30191 / JCM 1249 / CCUG 213 / NBRC 12614 / NCIMB 9131 / NCTC 9757 / MK).